Reading from the N-terminus, the 193-residue chain is Oleosin S1-2 (193 aa).

Ala2 is subject to N-acetylalanine. The segment at 2 to 39 is polar; sequence ADVRTHAHQVQVHPLRQHEGGIKVVYPQSGPSSTQVLA. A run of 3 helical transmembrane segments spans residues 37–57, 66–86, and 87–107; these read VLAVVAGVPVGGTLLTLAGLT, ILAFPLFLIFSPVIVPAAFVI, and GLAMTGFMASGAIGLTGLSSM. Positions 40–113 are hydrophobic; it reads VVAGVPVGGT…LSSMSWVLNH (74 aa). The interval 139-193 is disordered; that stretch reads AGQRTKDAGQTIEDKAHDVRESKTYDVRDRDTKGHTASGGDRDTKTTREVRVATT. Over residues 142 to 193 the composition is skewed to basic and acidic residues; that stretch reads RTKDAGQTIEDKAHDVRESKTYDVRDRDTKGHTASGGDRDTKTTREVRVATT.

The protein belongs to the oleosin family.

The protein resides in the lipid droplet. It localises to the membrane. May have a structural role to stabilize the lipid body during desiccation of the seed by preventing coalescence of the oil. Probably interacts with both lipid and phospholipid moieties of lipid bodies. May also provide recognition signals for specific lipase anchorage in lipolysis during seedling growth. This chain is Oleosin S1-2 (S1), found in Brassica napus (Rape).